A 604-amino-acid chain; its full sequence is FAD-linked oxidoreductase easE (604 aa).

The first 25 residues, 1-25, serve as a signal peptide directing secretion; sequence MQFLLWSTGLVALLSWLIYTQETQS. Asn-47, Asn-70, Asn-106, and Asn-196 each carry an N-linked (GlcNAc...) asparagine glycan. The 184-residue stretch at 125–308 folds into the FAD-binding PCMH-type domain; the sequence is QGRIPLFTVG…TRATMRVFPD (184 aa).

Belongs to the oxygen-dependent FAD-linked oxidoreductase family. FAD is required as a cofactor.

Its pathway is alkaloid biosynthesis; ergot alkaloid biosynthesis. Functionally, FAD-linked oxidoreductase; part of the gene cluster that mediates the biosynthesis of fungal ergot alkaloid. DmaW catalyzes the first step of ergot alkaloid biosynthesis by condensing dimethylallyl diphosphate (DMAP) and tryptophan to form 4-dimethylallyl-L-tryptophan. The second step is catalyzed by the methyltransferase easF that methylates 4-dimethylallyl-L-tryptophan in the presence of S-adenosyl-L-methionine, resulting in the formation of 4-dimethylallyl-L-abrine. The catalase easC and the FAD-dependent oxidoreductase easE then transform 4-dimethylallyl-L-abrine to chanoclavine-I which is further oxidized by easD in the presence of NAD(+), resulting in the formation of chanoclavine-I aldehyde. Chanoclavine-I aldehyde is the precursor of ergoamides and ergopeptines in Clavicipitaceae, and clavine-type alcaloids such as fumiclavine in Trichocomaceae. However, the metabolites downstream of chanoclavine-I aldehyde in Arthrodermataceae have not been identified yet. The chain is FAD-linked oxidoreductase easE from Trichophyton verrucosum (strain HKI 0517).